A 76-amino-acid chain; its full sequence is MAKRIKTPADIGALVRIVRKEQNLRQDELAGVAGVGLRFIVDLEAGKPTAQIGKVLQVLQTLGCSIDILAPGERRK.

Residues 15–69 form the HTH cro/C1-type domain; sequence VRIVRKEQNLRQDELAGVAGVGLRFIVDLEAGKPTAQIGKVLQVLQTLGCSIDIL. The segment at residues 26-45 is a DNA-binding region (H-T-H motif); that stretch reads QDELAGVAGVGLRFIVDLEA.

This is an uncharacterized protein from Sinorhizobium fredii (strain NBRC 101917 / NGR234).